We begin with the raw amino-acid sequence, 403 residues long: Argininosuccinate synthase (403 aa).

ATP-binding positions include 10–18 (AYSGGVDTS) and Ala38. Tyr89 is a binding site for L-citrulline. Gly119 contacts ATP. Positions 121, 125, and 126 each coordinate L-aspartate. An L-citrulline-binding site is contributed by Asn125. Positions 129, 177, 186, 262, and 274 each coordinate L-citrulline.

It belongs to the argininosuccinate synthase family. Type 1 subfamily. As to quaternary structure, homotetramer.

Its subcellular location is the cytoplasm. The enzyme catalyses L-citrulline + L-aspartate + ATP = 2-(N(omega)-L-arginino)succinate + AMP + diphosphate + H(+). Its pathway is amino-acid biosynthesis; L-arginine biosynthesis; L-arginine from L-ornithine and carbamoyl phosphate: step 2/3. This Parasynechococcus marenigrum (strain WH8102) protein is Argininosuccinate synthase.